The sequence spans 501 residues: Probable cytosol aminopeptidase (501 aa).

Residues lysine 272 and aspartate 277 each coordinate Mn(2+). Lysine 284 is a catalytic residue. Positions 295, 354, and 356 each coordinate Mn(2+). Arginine 358 is a catalytic residue.

It belongs to the peptidase M17 family. Mn(2+) serves as cofactor.

The protein localises to the cytoplasm. The catalysed reaction is Release of an N-terminal amino acid, Xaa-|-Yaa-, in which Xaa is preferably Leu, but may be other amino acids including Pro although not Arg or Lys, and Yaa may be Pro. Amino acid amides and methyl esters are also readily hydrolyzed, but rates on arylamides are exceedingly low.. The enzyme catalyses Release of an N-terminal amino acid, preferentially leucine, but not glutamic or aspartic acids.. Functionally, presumably involved in the processing and regular turnover of intracellular proteins. Catalyzes the removal of unsubstituted N-terminal amino acids from various peptides. This is Probable cytosol aminopeptidase from Buchnera aphidicola subsp. Baizongia pistaciae (strain Bp).